The following is a 372-amino-acid chain: 4-hydroxy-3-methylbut-2-en-1-yl diphosphate synthase (flavodoxin) (372 aa).

Residues cysteine 270, cysteine 273, cysteine 305, and glutamate 312 each contribute to the [4Fe-4S] cluster site.

This sequence belongs to the IspG family. [4Fe-4S] cluster serves as cofactor.

It catalyses the reaction (2E)-4-hydroxy-3-methylbut-2-enyl diphosphate + oxidized [flavodoxin] + H2O + 2 H(+) = 2-C-methyl-D-erythritol 2,4-cyclic diphosphate + reduced [flavodoxin]. Its pathway is isoprenoid biosynthesis; isopentenyl diphosphate biosynthesis via DXP pathway; isopentenyl diphosphate from 1-deoxy-D-xylulose 5-phosphate: step 5/6. Converts 2C-methyl-D-erythritol 2,4-cyclodiphosphate (ME-2,4cPP) into 1-hydroxy-2-methyl-2-(E)-butenyl 4-diphosphate. The protein is 4-hydroxy-3-methylbut-2-en-1-yl diphosphate synthase (flavodoxin) of Cronobacter sakazakii (strain ATCC BAA-894) (Enterobacter sakazakii).